Reading from the N-terminus, the 118-residue chain is Ferredoxin-thioredoxin reductase, catalytic chain (118 aa).

C57 serves as a coordination point for [4Fe-4S] cluster. C59 acts as the Nucleophile in catalysis. Cysteines 59 and 89 form a disulfide. [4Fe-4S] cluster contacts are provided by C76, C78, and C87.

This sequence belongs to the ferredoxin thioredoxin reductase beta subunit family. In terms of assembly, heterodimer of subunit A (variable subunit) and subunit B (catalytic subunit). Heterodimeric FTR forms a complex with ferredoxin and thioredoxin. [4Fe-4S] cluster serves as cofactor.

It localises to the plastid. Its subcellular location is the chloroplast. It catalyses the reaction [thioredoxin]-disulfide + 2 reduced [2Fe-2S]-[ferredoxin] + 2 H(+) = [thioredoxin]-dithiol + 2 oxidized [2Fe-2S]-[ferredoxin]. Catalytic subunit of the ferredoxin-thioredoxin reductase (FTR), which catalyzes the two-electron reduction of thioredoxins by the electrons provided by reduced ferredoxin. This is Ferredoxin-thioredoxin reductase, catalytic chain (ftrB) from Porphyra purpurea (Red seaweed).